A 151-amino-acid polypeptide reads, in one-letter code: Small ribosomal subunit protein uS15 (151 aa).

Belongs to the universal ribosomal protein uS15 family.

The polypeptide is Small ribosomal subunit protein uS15 (RPS13) (Lumbricus rubellus (Humus earthworm)).